The chain runs to 2021 residues: HEAT repeat-containing protein 5A (2021 aa).

2 HEAT repeats span residues Ser-795–Ser-836 and Val-1059–Ala-1096. Disordered stretches follow at residues Glu-1503–Asp-1528 and Arg-1989–Pro-2012. A compositionally biased stretch (polar residues) spans Val-1512 to Gly-1522.

It belongs to the HEATR5 family.

This chain is HEAT repeat-containing protein 5A (heatr5a), found in Xenopus tropicalis (Western clawed frog).